We begin with the raw amino-acid sequence, 341 residues long: Anthranilate phosphoribosyltransferase (341 aa).

Residues Gly-80, 83 to 84 (GD), Thr-88, 90 to 93 (NIST), 108 to 116 (KHGNYSVSS), and Ser-120 contribute to the 5-phospho-alpha-D-ribose 1-diphosphate site. Residue Gly-80 participates in anthranilate binding. Residue Ser-92 coordinates Mg(2+). Position 111 (Asn-111) interacts with anthranilate. Anthranilate is bound at residue Arg-166. Residues Asp-224 and Glu-225 each coordinate Mg(2+).

It belongs to the anthranilate phosphoribosyltransferase family. Homodimer. Requires Mg(2+) as cofactor.

The catalysed reaction is N-(5-phospho-beta-D-ribosyl)anthranilate + diphosphate = 5-phospho-alpha-D-ribose 1-diphosphate + anthranilate. Its pathway is amino-acid biosynthesis; L-tryptophan biosynthesis; L-tryptophan from chorismate: step 2/5. In terms of biological role, catalyzes the transfer of the phosphoribosyl group of 5-phosphorylribose-1-pyrophosphate (PRPP) to anthranilate to yield N-(5'-phosphoribosyl)-anthranilate (PRA). The protein is Anthranilate phosphoribosyltransferase of Haloquadratum walsbyi (strain DSM 16790 / HBSQ001).